A 302-amino-acid chain; its full sequence is Stanniocalcin-2 (302 aa).

An N-terminal signal peptide occupies residues 1–24 (MCAERLGQFMTLALVLATFDPARG). The tract at residues 23 to 44 (RGTDATNPPEGPQDRSPQQKGR) is disordered. N-linked (GlcNAc...) asparagine glycans are attached at residues Asn-73 and Asn-74. Positions 217-302 (RPPTAPPERQ…EQSEYSDIRR (86 aa)) are disordered. Residues 227–264 (PQVDRTKLSRAHHGEAGHHLPEPSSRETGRGAKGERGS) are compositionally biased toward basic and acidic residues. 2 positions are modified to phosphoserine: Ser-250 and Ser-251. At Thr-254 the chain carries Phosphothreonine.

Belongs to the stanniocalcin family. In terms of assembly, homodimer; disulfide-linked.

It localises to the secreted. In terms of biological role, has an anti-hypocalcemic action on calcium and phosphate homeostasis. The sequence is that of Stanniocalcin-2 (STC2) from Pongo abelii (Sumatran orangutan).